A 491-amino-acid chain; its full sequence is Probable glycine dehydrogenase (decarboxylating) subunit 2 (491 aa).

At K264 the chain carries N6-(pyridoxal phosphate)lysine.

This sequence belongs to the GcvP family. C-terminal subunit subfamily. In terms of assembly, the glycine cleavage system is composed of four proteins: P, T, L and H. In this organism, the P 'protein' is a heterodimer of two subunits. Pyridoxal 5'-phosphate is required as a cofactor.

It carries out the reaction N(6)-[(R)-lipoyl]-L-lysyl-[glycine-cleavage complex H protein] + glycine + H(+) = N(6)-[(R)-S(8)-aminomethyldihydrolipoyl]-L-lysyl-[glycine-cleavage complex H protein] + CO2. In terms of biological role, the glycine cleavage system catalyzes the degradation of glycine. The P protein binds the alpha-amino group of glycine through its pyridoxal phosphate cofactor; CO(2) is released and the remaining methylamine moiety is then transferred to the lipoamide cofactor of the H protein. The polypeptide is Probable glycine dehydrogenase (decarboxylating) subunit 2 (Coxiella burnetii (strain CbuK_Q154) (Coxiella burnetii (strain Q154))).